A 214-amino-acid chain; its full sequence is Large ribosomal subunit protein uL3 (214 aa).

Over residues 132 to 145 (SNRASHGNSVTTRA) the composition is skewed to polar residues. Residues 132 to 155 (SNRASHGNSVTTRAPGSIGQAQDP) are disordered. An N5-methylglutamine modification is found at glutamine 153.

This sequence belongs to the universal ribosomal protein uL3 family. As to quaternary structure, part of the 50S ribosomal subunit. Forms a cluster with proteins L14 and L19. Post-translationally, methylated by PrmB.

In terms of biological role, one of the primary rRNA binding proteins, it binds directly near the 3'-end of the 23S rRNA, where it nucleates assembly of the 50S subunit. This is Large ribosomal subunit protein uL3 from Laribacter hongkongensis (strain HLHK9).